Reading from the N-terminus, the 440-residue chain is Xaa-Pro dipeptidase (440 aa).

Mn(2+)-binding residues include D244, D255, H335, E380, and E419.

Belongs to the peptidase M24B family. Bacterial-type prolidase subfamily. Requires Mn(2+) as cofactor.

The catalysed reaction is Xaa-L-Pro dipeptide + H2O = an L-alpha-amino acid + L-proline. Functionally, splits dipeptides with a prolyl residue in the C-terminal position. This Shewanella baltica (strain OS223) protein is Xaa-Pro dipeptidase.